The following is a 617-amino-acid chain: Dihydroxy-acid dehydratase (617 aa).

Aspartate 82 lines the Mg(2+) pocket. [2Fe-2S] cluster is bound at residue cysteine 123. Mg(2+) is bound by residues aspartate 124 and lysine 125. Lysine 125 carries the N6-carboxylysine modification. A [2Fe-2S] cluster-binding site is contributed by cysteine 197. Residue glutamate 497 participates in Mg(2+) binding. Serine 523 acts as the Proton acceptor in catalysis.

Belongs to the IlvD/Edd family. In terms of assembly, homodimer. The cofactor is [2Fe-2S] cluster. Requires Mg(2+) as cofactor.

The catalysed reaction is (2R)-2,3-dihydroxy-3-methylbutanoate = 3-methyl-2-oxobutanoate + H2O. It carries out the reaction (2R,3R)-2,3-dihydroxy-3-methylpentanoate = (S)-3-methyl-2-oxopentanoate + H2O. Its pathway is amino-acid biosynthesis; L-isoleucine biosynthesis; L-isoleucine from 2-oxobutanoate: step 3/4. It participates in amino-acid biosynthesis; L-valine biosynthesis; L-valine from pyruvate: step 3/4. Functions in the biosynthesis of branched-chain amino acids. Catalyzes the dehydration of (2R,3R)-2,3-dihydroxy-3-methylpentanoate (2,3-dihydroxy-3-methylvalerate) into 2-oxo-3-methylpentanoate (2-oxo-3-methylvalerate) and of (2R)-2,3-dihydroxy-3-methylbutanoate (2,3-dihydroxyisovalerate) into 2-oxo-3-methylbutanoate (2-oxoisovalerate), the penultimate precursor to L-isoleucine and L-valine, respectively. In Streptomyces coelicolor (strain ATCC BAA-471 / A3(2) / M145), this protein is Dihydroxy-acid dehydratase.